We begin with the raw amino-acid sequence, 291 residues long: Neugrin (291 aa).

A signal peptide spans 1–15 (MAVTLSLLLSGRVCA). The disordered stretch occupies residues 27–49 (VADPGPIGREPDPDSDWEPEERE). The segment covering 39 to 49 (PDSDWEPEERE) has biased composition (acidic residues). Phosphoserine is present on Ser41. An N-linked (GlcNAc...) asparagine glycan is attached at Asn158. Positions 224–270 (VAAPLGHPRELQKYSSDSESPRRTGNGALPSDQKLEELKAEEPGNFS) are disordered. The span at 256 to 265 (QKLEELKAEE) shows a compositional bias: basic and acidic residues.

The protein belongs to the neugrin family. Forms a regulatory protein-RNA complex, consisting of RCC1L, NGRN, RPUSD3, RPUSD4, TRUB2, FASTKD2 and 16S mt-rRNA. Interacts with 16S mt-rRNA; this interaction is direct.

Its subcellular location is the nucleus. The protein resides in the secreted. The protein localises to the mitochondrion membrane. Functionally, plays an essential role in mitochondrial ribosome biogenesis. As a component of a functional protein-RNA module, consisting of RCC1L, NGRN, RPUSD3, RPUSD4, TRUB2, FASTKD2 and 16S mitochondrial ribosomal RNA (16S mt-rRNA), controls 16S mt-rRNA abundance and is required for intra-mitochondrial translation of core subunits of the oxidative phosphorylation system. The chain is Neugrin (NGRN) from Pongo abelii (Sumatran orangutan).